The chain runs to 262 residues: Aminoglycoside (3'') (9) adenylyltransferase (262 aa).

It catalyses the reaction streptomycin + ATP = 3''-O-adenylylstreptomycin + diphosphate. It carries out the reaction spectinomycin + ATP = 9-O-adenylylspectinomycin + diphosphate. Functionally, mediates bacterial resistance to the antibiotics streptomycin and spectinomycin. This is Aminoglycoside (3'') (9) adenylyltransferase from Shigella flexneri.